A 274-amino-acid polypeptide reads, in one-letter code: MGTLSVNQNKLQKRLRRLAGEAITDYNMIEDGDKVMVCLSGGKDSYTMLDVLLHLQKVAPIKFDIVAVNMDQKQPGFPEHVLPAYLKELGVEYHIVEKDTYSVVKELVPEGKTTCSLCSRLRRGTLYTFADEIGATKMALGHHRDDIVETFFLNMFFNGALKGMPPKLRADDGRNVVIRPLAYCSEKDIQAYSDMKEFPIIPCNLCGSQENLQRQVVKDMLVEWERKHPGRTESIFRALQNVAPSQLADRNLFDFTSLKIDESATPRFLDVLNI.

Residues 40–45 (SGGKDS) carry the PP-loop motif motif. Cys-115, Cys-118, and Cys-206 together coordinate [4Fe-4S] cluster.

This sequence belongs to the TtcA family. In terms of assembly, homodimer. Requires Mg(2+) as cofactor. [4Fe-4S] cluster is required as a cofactor.

The protein localises to the cytoplasm. The catalysed reaction is cytidine(32) in tRNA + S-sulfanyl-L-cysteinyl-[cysteine desulfurase] + AH2 + ATP = 2-thiocytidine(32) in tRNA + L-cysteinyl-[cysteine desulfurase] + A + AMP + diphosphate + H(+). The protein operates within tRNA modification. Functionally, catalyzes the ATP-dependent 2-thiolation of cytidine in position 32 of tRNA, to form 2-thiocytidine (s(2)C32). The sulfur atoms are provided by the cysteine/cysteine desulfurase (IscS) system. The sequence is that of tRNA-cytidine(32) 2-sulfurtransferase from Pseudomonas entomophila (strain L48).